A 420-amino-acid chain; its full sequence is MNTNKLHKQINLIGERAQAASQIVSGLSIDERNKILLSFASEIEKNSDKIVEINVQELKEHRDDLSLPMQKRLQLSKEKISTIASSLKALVKLADPLSEGNTSWQAKAGFKVVKKTVPLGVVAMIYEARPNVTIDAAALTIKSANAVILRGGKESIKTNQVLVSILQQSLKKLGYSENIVQLIEDTSHDSVKELLHLRKFIDVLIPRGSGSFINYVVDNSTVPVIETGAGNDHIFVDKSADQEEAIKVIVNSKIQNPSVCNSAEKLLVHADIAKEFLPKLFDRLSNEGVEIRGDKEVQLIDNRVELAKDFDWDTEYNDLIIAVHLVNNLKEAIDWIGKHTTHHTEAILTNSAENASEFMQRIDAAVVTENASTRFTDGFEFGFGAEIGISTQKLHARGPMGLTALTSYKYEIFGHGEIRK.

Belongs to the gamma-glutamyl phosphate reductase family.

The protein localises to the cytoplasm. The enzyme catalyses L-glutamate 5-semialdehyde + phosphate + NADP(+) = L-glutamyl 5-phosphate + NADPH + H(+). It functions in the pathway amino-acid biosynthesis; L-proline biosynthesis; L-glutamate 5-semialdehyde from L-glutamate: step 2/2. Catalyzes the NADPH-dependent reduction of L-glutamate 5-phosphate into L-glutamate 5-semialdehyde and phosphate. The product spontaneously undergoes cyclization to form 1-pyrroline-5-carboxylate. The sequence is that of Gamma-glutamyl phosphate reductase from Oenococcus oeni (strain ATCC BAA-331 / PSU-1).